Reading from the N-terminus, the 345-residue chain is Succinylglutamate desuccinylase (345 aa).

Zn(2+)-binding residues include histidine 64, glutamate 67, and histidine 161. Glutamate 225 is a catalytic residue.

This sequence belongs to the AspA/AstE family. Succinylglutamate desuccinylase subfamily. The cofactor is Zn(2+).

The enzyme catalyses N-succinyl-L-glutamate + H2O = L-glutamate + succinate. Its pathway is amino-acid degradation; L-arginine degradation via AST pathway; L-glutamate and succinate from L-arginine: step 5/5. Functionally, transforms N(2)-succinylglutamate into succinate and glutamate. In Shewanella pealeana (strain ATCC 700345 / ANG-SQ1), this protein is Succinylglutamate desuccinylase.